The chain runs to 63 residues: Putative conjugal transfer lipoprotein XF_a0011.1 (63 aa).

An N-terminal signal peptide occupies residues 1 to 15; that stretch reads MRYTFGIVTVYLLAG. Cysteine 16 carries the N-palmitoyl cysteine lipid modification. Cysteine 16 carries S-diacylglycerol cysteine lipidation.

It to B.suis ORF12 in VirB region.

The protein resides in the cell inner membrane. This is Putative conjugal transfer lipoprotein XF_a0011.1 from Xylella fastidiosa (strain 9a5c).